We begin with the raw amino-acid sequence, 186 residues long: Phosphoprotein p30 (186 aa).

Belongs to the asfivirus phosphoprotein p30 family. As to quaternary structure, oligomer. Interacts with host HNRNPK.

It localises to the host cytoplasm. The protein resides in the host nucleus. It is found in the virion. Functionally, modifies the subcellular distribution of heterogeneous nuclear ribonucleoprotein K (HNRNPK) and may contribute to modulate HNRNPK functions related to processing and export of mRNAs during ASFV infection. Necessary for virus internalization. The chain is Phosphoprotein p30 from Ornithodoros (relapsing fever ticks).